Reading from the N-terminus, the 534-residue chain is MQGAIARMCVLVAAAILNHPLLSPQENATLHDQDEELMARMREHEEMLEKEQAKLEKEFSQLTPEPENIGSEEEYSGYLWSSVVFLVFLVIEMFRMHGAHTEIAPFGDEDIYSEGGSLAPRLKALDKEVLNNFCDKCTYTSSNEIWRVREFVEGFADDLLESLRSVCDRDADMEVGDFVGIGSVFESWKVCKPLMCDLLVPFSPPDPFALQFHLWCSCSSNVPPNMQGCGKIKVSKSGGNEGCLCGSANMGEDMLCLLHNGNDVPSVERSPDDLLCTRNTSFLSKDQVMKWFQISVTKAWGRISHKYDFEVTFRNLDAAGALKVRFHSGKVVVLNMIPVVQLQDTDAYFVSHFPSGSESPPDPYWPLSFAVYERNLLKLISKRLPQNSCHLHCLQIVTFLHRKQASLTGRTALTNYHIKTVLLHLLLGKRASSWGTEHMESRLCDLLSFLHRSLQEKRLHHVMIGNSKVTELIQVPEIISRAEPVNLLRCLVLQAELHAQTLQHFNEMLKNAPALLQDYTPHWSNGLCLLGDGV.

Residues Met1–Ala15 form the signal peptide. Residues Ile16 to Glu74 lie on the Extracellular side of the membrane. Positions Gln25 to Thr63 form a coiled coil. Residue Asn27 is glycosylated (N-linked (GlcNAc...) asparagine). Residues Tyr75–Ile91 form a helical membrane-spanning segment. Over Glu92–Val534 the chain is Cytoplasmic.

This sequence belongs to the ITPRIP family.

It is found in the cell membrane. Its subcellular location is the nucleus outer membrane. Enhances Ca(2+)-mediated inhibition of inositol 1,4,5-triphosphate receptor (ITPR) Ca(2+) release. The polypeptide is Inositol 1,4,5-trisphosphate receptor-interacting protein (itprip) (Takifugu rubripes (Japanese pufferfish)).